The chain runs to 779 residues: ATP-dependent RNA helicase SUPV3L1, mitochondrial (779 aa).

The transit peptide at 1 to 40 (MSLPRCTLLWARLPAGRGAGPRAAPCSALRALVGSFPGAS) directs the protein to the mitochondrion. Residue lysine 99 is modified to N6-acetyllysine. A Helicase ATP-binding domain is found at 194 to 334 (EARARQRKII…AINLVSELLY (141 aa)). An ATP-binding site is contributed by 207 to 214 (GPTNSGKT). Residues 353-521 (VLDHALESLD…PTAEQIEMFA (169 aa)) enclose the Helicase C-terminal domain. Residues 650–779 (PDSSLVRSLQ…RRKKKDPDSD (130 aa)) form an interaction with LAMTOR5, important for protein stability region. Positions 693 to 703 (SGDQSRLSGAS) are enriched in polar residues. Disordered regions lie at residues 693–732 (SGDQ…KELP) and 754–779 (EWLT…PDSD). Serine 725 carries the phosphoserine modification. Basic and acidic residues predominate over residues 761 to 779 (EHSREKVGTRRKKKDPDSD).

This sequence belongs to the helicase family. Homodimer; in free form. Component of the mitochondrial degradosome (mtEXO) complex which is a heteropentamer containing 2 copies of SUPV3L1 and 3 copies of PNPT1. As part of mitochondrial degradosome complex, interacts with GRSF1 in a RNA-dependent manner; the interaction enhances the activity of the complex. Interacts with LAMTOR5/HBXIP, WRN and BLM. Mg(2+) is required as a cofactor. The cofactor is Mn(2+).

The protein localises to the nucleus. Its subcellular location is the mitochondrion matrix. The protein resides in the mitochondrion nucleoid. The catalysed reaction is ATP + H2O = ADP + phosphate + H(+). Its activity is regulated as follows. Helicase activity toward DNA substrate is inhibited by micromolar concentrations of 5,6-dichloro-1-(beta-D-ribofuranosyl)benzotriazole (DRBT) and 4,5,6,7-tetrabromobenzotriazole (TBBT). Helicase activity toward RNA substrate is inhibited by elevated concentrations of TBBT. Inhibited by some ring-expanded nucleoside analogs. Major helicase player in mitochondrial RNA metabolism. Component of the mitochondrial degradosome (mtEXO) complex, that degrades 3' overhang double-stranded RNA with a 3'-to-5' directionality in an ATP-dependent manner. Involved in the degradation of non-coding mitochondrial transcripts (MT-ncRNA) and tRNA-like molecules. ATPase and ATP-dependent multisubstrate helicase, able to unwind double-stranded (ds) DNA and RNA, and RNA/DNA heteroduplexes in the 5'-to-3' direction. Plays a role in the RNA surveillance system in mitochondria; regulates the stability of mature mRNAs, the removal of aberrantly formed mRNAs and the rapid degradation of non coding processing intermediates. Also implicated in recombination and chromatin maintenance pathways. May protect cells from apoptosis. Associates with mitochondrial DNA. In Mus musculus (Mouse), this protein is ATP-dependent RNA helicase SUPV3L1, mitochondrial (Supv3l1).